Here is a 609-residue protein sequence, read N- to C-terminus: Glutamine--fructose-6-phosphate aminotransferase [isomerizing] (609 aa).

Residue Cys-2 is the Nucleophile; for GATase activity of the active site. Residues 2-218 enclose the Glutamine amidotransferase type-2 domain; the sequence is CGIVGAIAQR…EGDIAEITRR (217 aa). 2 SIS domains span residues 286 to 426 and 458 to 599; these read ADEL…LKGL and LAED…VDQP. Lys-604 (for Fru-6P isomerization activity) is an active-site residue.

Homodimer.

The protein resides in the cytoplasm. The catalysed reaction is D-fructose 6-phosphate + L-glutamine = D-glucosamine 6-phosphate + L-glutamate. Catalyzes the first step in hexosamine metabolism, converting fructose-6P into glucosamine-6P using glutamine as a nitrogen source. In Escherichia coli O157:H7, this protein is Glutamine--fructose-6-phosphate aminotransferase [isomerizing].